Reading from the N-terminus, the 240-residue chain is Large ribosomal subunit protein uL2 (240 aa).

Polar residues predominate over residues 1-11 (MGKRLISQNRG). Disordered stretches follow at residues 1 to 28 (MGKR…KGAV) and 206 to 240 (GGGR…TGRK). Basic residues-rich tracts occupy residues 13–28 (GTPK…KGAV) and 224–240 (SPGR…TGRK).

Belongs to the universal ribosomal protein uL2 family. Part of the 50S ribosomal subunit. Forms a bridge to the 30S subunit in the 70S ribosome.

Its function is as follows. One of the primary rRNA binding proteins. Required for association of the 30S and 50S subunits to form the 70S ribosome, for tRNA binding and peptide bond formation. It has been suggested to have peptidyltransferase activity; this is somewhat controversial. Makes several contacts with the 16S rRNA in the 70S ribosome. The chain is Large ribosomal subunit protein uL2 from Methanococcus maripaludis (strain C5 / ATCC BAA-1333).